The sequence spans 184 residues: MTVEVGADENPDFAHDETDGAGDESDDEDAQGRDPELDLAVQYGDEIGDAQRKSLPKRKVIAEWLEPAIFSDAQFTVRFVGADEGRALNHSYRHKDYATNVLTFAYGEEPDGVTVADLVLCCPVVEKEAREQGKTLVAHYAHLLVHGALHAQGYDHERGEEDAAEMEALEIDILAKLGFPNPYR.

Acidic residues-rich tracts occupy residues 1–11 and 19–29; these read MTVEVGADENP and DGAGDESDDED. The segment at 1-38 is disordered; it reads MTVEVGADENPDFAHDETDGAGDESDDEDAQGRDPELD. Residues histidine 146, histidine 150, and histidine 156 each coordinate Zn(2+).

Belongs to the endoribonuclease YbeY family. Zn(2+) serves as cofactor.

It localises to the cytoplasm. Its function is as follows. Single strand-specific metallo-endoribonuclease involved in late-stage 70S ribosome quality control and in maturation of the 3' terminus of the 16S rRNA. This chain is Endoribonuclease YbeY, found in Burkholderia pseudomallei (strain K96243).